We begin with the raw amino-acid sequence, 273 residues long: Putative pyruvate, phosphate dikinase regulatory protein (273 aa).

149 to 156 contributes to the ADP binding site; sequence GPSRTSKT.

It belongs to the pyruvate, phosphate/water dikinase regulatory protein family. PDRP subfamily.

The enzyme catalyses N(tele)-phospho-L-histidyl/L-threonyl-[pyruvate, phosphate dikinase] + ADP = N(tele)-phospho-L-histidyl/O-phospho-L-threonyl-[pyruvate, phosphate dikinase] + AMP + H(+). The catalysed reaction is N(tele)-phospho-L-histidyl/O-phospho-L-threonyl-[pyruvate, phosphate dikinase] + phosphate + H(+) = N(tele)-phospho-L-histidyl/L-threonyl-[pyruvate, phosphate dikinase] + diphosphate. Bifunctional serine/threonine kinase and phosphorylase involved in the regulation of the pyruvate, phosphate dikinase (PPDK) by catalyzing its phosphorylation/dephosphorylation. This chain is Putative pyruvate, phosphate dikinase regulatory protein, found in Rickettsia prowazekii (strain Madrid E).